Here is a 509-residue protein sequence, read N- to C-terminus: 5-hydroxytryptamine receptor (509 aa).

Over 1–99 the chain is Extracellular; the sequence is MANFTFGDLA…YSHEHLVLTS (99 aa). Residues N3, N47, N58, N68, N72, and N78 are each glycosylated (N-linked (GlcNAc...) asparagine). A helical transmembrane segment spans residues 100 to 122; the sequence is VILGLFVLCCIIGNCFVIAAVML. Residues 123–132 lie on the Cytoplasmic side of the membrane; sequence ERSLHNVANY. The helical transmembrane segment at 133–154 threads the bilayer; it reads LILSLAVADLMVAVLVMPLSVV. Topologically, residues 155-169 are extracellular; the sequence is SEISKVWFLHSEVCD. C168 and C246 form a disulfide bridge. Residues 170 to 191 form a helical membrane-spanning segment; that stretch reads MWISVDVLCCTASILHLVAIAM. Residues 192-210 are Cytoplasmic-facing; it reads DRYWAVTSIDYIRRRSARR. The helical transmembrane segment at 211 to 233 threads the bilayer; it reads ILLMIMVVWIVALFISIPPLFGW. Residues 234-259 lie on the Extracellular side of the membrane; that stretch reads RDPNNDPDKTGTCIISQDKGYTIFST. The chain crosses the membrane as a helical span at residues 260–281; it reads VGAFYLPMLVMMIIYIRIWLVA. The Cytoplasmic portion of the chain corresponds to 282–432; sequence RSRIRKDKFQ…LKRERKAART (151 aa). The segment at 323-372 is disordered; sequence SPDSTTEKKKRRAPFKSYGCSPRPERKKNRAKKLPENANGVNSNSSSSER. Residues 433–456 traverse the membrane as a helical segment; sequence LAIITGAFLICWLPFFIIALIGPF. The Extracellular segment spans residues 457 to 465; sequence VDPEGIPPF. The helical transmembrane segment at 466 to 488 threads the bilayer; that stretch reads ARSFVLWLGYFNSLLNPIIYTIF. Over 489-509 the chain is Cytoplasmic; sequence SPEFRSAFQKILFGKYRRGHR.

Belongs to the G-protein coupled receptor 1 family.

The protein resides in the cell membrane. In terms of biological role, this is a receptor for 5-hydroxytryptamine (serotonin), a biogenic hormone that function as a neurotransmitter, a hormone, and a mitogen. The polypeptide is 5-hydroxytryptamine receptor (Lymnaea stagnalis (Great pond snail)).